Consider the following 161-residue polypeptide: Troponin C, slow skeletal and cardiac muscles (161 aa).

Met-1 is subject to N-acetylmethionine. EF-hand domains lie at 16 to 51 (QKNE…LGQN), 52 to 87 (PTPE…CMKD), 92 to 127 (KSEE…TGET), and 128 to 161 (ITED…KGVE). Residues Asp-65, Asp-67, Ser-69, Thr-71, and Glu-76 each contribute to the Ca(2+) site. Phosphoserine is present on Ser-98. The Ca(2+) site is built by Asp-105, Asn-107, Asp-109, Tyr-111, Glu-116, Asp-141, Asn-143, Asp-145, Arg-147, and Glu-152.

The protein belongs to the troponin C family.

In terms of biological role, troponin is the central regulatory protein of striated muscle contraction. Tn consists of three components: Tn-I which is the inhibitor of actomyosin ATPase, Tn-T which contains the binding site for tropomyosin and Tn-C. The binding of calcium to Tn-C abolishes the inhibitory action of Tn on actin filaments. The sequence is that of Troponin C, slow skeletal and cardiac muscles (Tnnc1) from Mus musculus (Mouse).